Reading from the N-terminus, the 99-residue chain is U1-theraphotoxin-Tal1a (99 aa).

The signal sequence occupies residues 1–22 (MNTIQVIIFAVVLVLTVTVGQA). Residues 23–57 (DEDSAETSLLRKLKEAEASLFGQHLEESQHSREKR) constitute a propeptide that is removed on maturation. 3 cysteine pairs are disulfide-bonded: C58–C73, C65–C78, and C72–C93. The residue at position 98 (S98) is a Serine amide.

The protein belongs to the neurotoxin 14 (magi-1) family. 08 (Ltx-4) subfamily. Expressed by the venom gland.

The protein localises to the secreted. Its function is as follows. Insecticidal toxin that shows strong lethal effects on American cockroaches (P.americana) and common mealbeetle (T.molitor). Possibly acts by blocking ion channel currents. Also shows significant analgesic effects in mice models of pain including abdominal writhing induced by acetic acid and formalin-induced paw licking tests. In addition, exerts marked inhibition of proliferation of some human tumor cell lines including C8166, Molt-4, A-549, BIU-87, T24, and Calu-6. The sequence is that of U1-theraphotoxin-Tal1a from Tliltocatl albopilosus (Curlyhair tarantula).